Consider the following 336-residue polypeptide: Dihydroorotate dehydrogenase (quinone) (336 aa).

FMN is bound by residues Ala-62–Lys-66 and Thr-86. Residue Lys-66 participates in substrate binding. A substrate-binding site is contributed by Asn-111–Phe-115. Residues Asn-139 and Asn-172 each contribute to the FMN site. Asn-172 is a substrate binding site. The active-site Nucleophile is Ser-175. Asn-177 provides a ligand contact to substrate. Positions 217 and 245 each coordinate FMN. Asn-246–Thr-247 contacts substrate. FMN contacts are provided by residues Gly-268, Gly-297, and Tyr-318 to Ser-319.

This sequence belongs to the dihydroorotate dehydrogenase family. Type 2 subfamily. Monomer. The cofactor is FMN.

It is found in the cell membrane. It carries out the reaction (S)-dihydroorotate + a quinone = orotate + a quinol. Its pathway is pyrimidine metabolism; UMP biosynthesis via de novo pathway; orotate from (S)-dihydroorotate (quinone route): step 1/1. Catalyzes the conversion of dihydroorotate to orotate with quinone as electron acceptor. The protein is Dihydroorotate dehydrogenase (quinone) of Salmonella choleraesuis (strain SC-B67).